The sequence spans 302 residues: 4-hydroxy-tetrahydrodipicolinate synthase (302 aa).

Thr56 is a binding site for pyruvate. Catalysis depends on Tyr145, which acts as the Proton donor/acceptor. Lys173 acts as the Schiff-base intermediate with substrate in catalysis. Val215 serves as a coordination point for pyruvate.

It belongs to the DapA family. As to quaternary structure, homotetramer; dimer of dimers.

Its subcellular location is the cytoplasm. The catalysed reaction is L-aspartate 4-semialdehyde + pyruvate = (2S,4S)-4-hydroxy-2,3,4,5-tetrahydrodipicolinate + H2O + H(+). It functions in the pathway amino-acid biosynthesis; L-lysine biosynthesis via DAP pathway; (S)-tetrahydrodipicolinate from L-aspartate: step 3/4. Catalyzes the condensation of (S)-aspartate-beta-semialdehyde [(S)-ASA] and pyruvate to 4-hydroxy-tetrahydrodipicolinate (HTPA). This Prochlorococcus marinus subsp. pastoris (strain CCMP1986 / NIES-2087 / MED4) protein is 4-hydroxy-tetrahydrodipicolinate synthase.